The sequence spans 492 residues: Probable malate:quinone oxidoreductase (492 aa).

The protein belongs to the MQO family. It depends on FAD as a cofactor.

The enzyme catalyses (S)-malate + a quinone = a quinol + oxaloacetate. It participates in carbohydrate metabolism; tricarboxylic acid cycle; oxaloacetate from (S)-malate (quinone route): step 1/1. The protein is Probable malate:quinone oxidoreductase of Methylobacillus flagellatus (strain ATCC 51484 / DSM 6875 / VKM B-1610 / KT).